A 699-amino-acid polypeptide reads, in one-letter code: 1,4-alpha-glucan-branching enzyme (699 aa).

Substrate contacts are provided by residues 59–60 and 88–90; these read NE and WAP. W104 lines the (1,4-alpha-D-glucosyl)n pocket. 115–118 contributes to the substrate binding site; the sequence is DYGK. K140 serves as a coordination point for (1,4-alpha-D-glucosyl)n. Residue Y170 is modified to Phosphotyrosine. 330–333 provides a ligand contact to substrate; the sequence is EVLR. The active-site Nucleophile is D354. E409 acts as the Proton donor in catalysis.

Belongs to the glycosyl hydrolase 13 family. GlgB subfamily. Monomer.

The enzyme catalyses Transfers a segment of a (1-&gt;4)-alpha-D-glucan chain to a primary hydroxy group in a similar glucan chain.. Its pathway is glycan biosynthesis; glycogen biosynthesis. Its function is as follows. Glycogen-branching enzyme participates in the glycogen biosynthetic process along with glycogenin and glycogen synthase. Generates alpha-1,6-glucosidic branches from alpha-1,4-linked glucose chains, to increase solubility of the glycogen polymer. The protein is 1,4-alpha-glucan-branching enzyme (GBE1) of Felis catus (Cat).